The following is a 447-amino-acid chain: NADP-specific glutamate dehydrogenase (447 aa).

3 residues coordinate substrate: K92, Q113, and K116. K128 acts as the Proton donor in catalysis. G167 lines the substrate pocket. NADP(+) is bound by residues T212 and N243. S379 lines the substrate pocket.

The protein belongs to the Glu/Leu/Phe/Val dehydrogenases family. Homohexamer.

The catalysed reaction is L-glutamate + NADP(+) + H2O = 2-oxoglutarate + NH4(+) + NADPH + H(+). Functionally, catalyzes the reversible oxidative deamination of glutamate to alpha-ketoglutarate and ammonia. This is NADP-specific glutamate dehydrogenase (gdh) from Corynebacterium efficiens (strain DSM 44549 / YS-314 / AJ 12310 / JCM 11189 / NBRC 100395).